A 519-amino-acid polypeptide reads, in one-letter code: tRNA-2-methylthio-N(6)-dimethylallyladenosine synthase (519 aa).

The segment at 1-23 is disordered; sequence MNEQQRKQQSQIRTEQANVDRIK. Positions 7 to 17 are enriched in polar residues; the sequence is KQQSQIRTEQA. The 119-residue stretch at 76–194 folds into the MTTase N-terminal domain; it reads KKFLIRTYGC…LPHLVKEALF (119 aa). 6 residues coordinate [4Fe-4S] cluster: Cys-85, Cys-121, Cys-155, Cys-231, Cys-235, and Cys-238. Positions 217 to 450 constitute a Radical SAM core domain; it reads RKGKIKAWVN…VNKQSAASMK (234 aa). The region spanning 450-513 is the TRAM domain; that stretch reads KDYAGKKVKV…TWSLNGVMVE (64 aa).

The protein belongs to the methylthiotransferase family. MiaB subfamily. In terms of assembly, monomer. It depends on [4Fe-4S] cluster as a cofactor.

It localises to the cytoplasm. It carries out the reaction N(6)-dimethylallyladenosine(37) in tRNA + (sulfur carrier)-SH + AH2 + 2 S-adenosyl-L-methionine = 2-methylsulfanyl-N(6)-dimethylallyladenosine(37) in tRNA + (sulfur carrier)-H + 5'-deoxyadenosine + L-methionine + A + S-adenosyl-L-homocysteine + 2 H(+). Catalyzes the methylthiolation of N6-(dimethylallyl)adenosine (i(6)A), leading to the formation of 2-methylthio-N6-(dimethylallyl)adenosine (ms(2)i(6)A) at position 37 in tRNAs that read codons beginning with uridine. The polypeptide is tRNA-2-methylthio-N(6)-dimethylallyladenosine synthase (Oceanobacillus iheyensis (strain DSM 14371 / CIP 107618 / JCM 11309 / KCTC 3954 / HTE831)).